We begin with the raw amino-acid sequence, 38 residues long: Large ribosomal subunit protein bL36 (38 aa).

It belongs to the bacterial ribosomal protein bL36 family.

This chain is Large ribosomal subunit protein bL36 (rpmJ), found in Streptococcus pneumoniae serotype 4 (strain ATCC BAA-334 / TIGR4).